The chain runs to 181 residues: Large ribosomal subunit protein uL6 (181 aa).

The protein belongs to the universal ribosomal protein uL6 family. Part of the 50S ribosomal subunit.

This protein binds to the 23S rRNA, and is important in its secondary structure. It is located near the subunit interface in the base of the L7/L12 stalk, and near the tRNA binding site of the peptidyltransferase center. The polypeptide is Large ribosomal subunit protein uL6 (Synechococcus sp. (strain CC9605)).